The chain runs to 1020 residues: Vacuolar membrane protease (1020 aa).

The Cytoplasmic segment spans residues 1-11; the sequence is MKCHNPFGFRV. A helical transmembrane segment spans residues 12-32; that stretch reads GPVTFWTIIIYLALLVPLLWI. Residues 33–410 lie on the Vacuolar side of the membrane; it reads HETVPPAPSS…GFAVFGLRGL (378 aa). Asn-50, Asn-94, and Asn-130 each carry an N-linked (GlcNAc...) asparagine glycan. The Zn(2+) site is built by His-191 and Asp-203. Residue Glu-237 is the Proton acceptor of the active site. The Zn(2+) site is built by Glu-238, Glu-263, and His-336. A helical membrane pass occupies residues 411–431; it reads FAWSLTLLIVSPLILAILVFI. Residues 432–467 are Cytoplasmic-facing; that stretch reads LNRHDKLYFFSRKINVHNEGSEDPVSIGGFRGFTRF. Residues 468–488 form a helical membrane-spanning segment; the sequence is PIAVGFSGALTLASAFLLTKI. At 489–491 the chain is on the vacuolar side; it reads NPM. Residues 492-512 form a helical membrane-spanning segment; the sequence is IVYSSEYAVWGMMLSLFYVSL. The Cytoplasmic portion of the chain corresponds to 513–529; it reads WMTLKGSSAVRPSALQR. The helical transmembrane segment at 530–550 threads the bilayer; that stretch reads GYIHIWLFIVSWGLLIVVAVT. Residues 551-561 lie on the Vacuolar side of the membrane; the sequence is EDRLKIASGYP. Residues 562–582 form a helical membrane-spanning segment; that stretch reads VVFLHSALFLSTVISFLELFG. The Cytoplasmic segment spans residues 583–690; the sequence is LTKKHDYARR…RLPGWTWILQ (108 aa). The tract at residues 609-648 is disordered; sequence DDALIAPDTPNDEAEDSDGEDSEHEPTETTPLRAGGDSRV. A compositionally biased stretch (acidic residues) spans 618–631; the sequence is PNDEAEDSDGEDSE. A helical membrane pass occupies residues 691 to 711; the sequence is FLLLAPINVILWGQIGLFAVA. Residues 712 to 724 lie on the Vacuolar side of the membrane; it reads ATQAGGADGGSVL. Residues 725 to 745 traverse the membrane as a helical segment; sequence TTYLIIAVLSIVILVPLAPFI. Residues 746-750 lie on the Cytoplasmic side of the membrane; that stretch reads HRVHY. The helical transmembrane segment at 751 to 771 threads the bilayer; the sequence is YVPIILFAAFAGTLIYNLIAF. At 772–1020 the chain is on the vacuolar side; sequence PFSANNRYKI…VGLVRPVKRF (249 aa). 3 N-linked (GlcNAc...) asparagine glycosylation sites follow: Asn-851, Asn-868, and Asn-873.

The protein belongs to the peptidase M28 family. Requires Zn(2+) as cofactor.

The protein resides in the vacuole membrane. May be involved in vacuolar sorting and osmoregulation. In Verticillium alfalfae (strain VaMs.102 / ATCC MYA-4576 / FGSC 10136) (Verticillium wilt of alfalfa), this protein is Vacuolar membrane protease.